A 443-amino-acid polypeptide reads, in one-letter code: Cobyrinate a,c-diamide synthase (443 aa).

The region spanning Lys248 to Tyr433 is the GATase cobBQ-type domain. Cys327 (nucleophile) is an active-site residue.

It belongs to the CobB/CbiA family. Mg(2+) serves as cofactor.

It carries out the reaction cob(II)yrinate + 2 L-glutamine + 2 ATP + 2 H2O = cob(II)yrinate a,c diamide + 2 L-glutamate + 2 ADP + 2 phosphate + 2 H(+). The enzyme catalyses Ni-sirohydrochlorin + 2 L-glutamine + 2 ATP + 2 H2O = Ni-sirohydrochlorin a,c-diamide + 2 L-glutamate + 2 ADP + 2 phosphate + 2 H(+). The protein operates within cofactor biosynthesis; adenosylcobalamin biosynthesis; cob(II)yrinate a,c-diamide from sirohydrochlorin (anaerobic route): step 10/10. Functionally, catalyzes the ATP-dependent amidation of the two carboxylate groups at positions a and c of cobyrinate, using either L-glutamine or ammonia as the nitrogen source. Involved in the biosynthesis of the unique nickel-containing tetrapyrrole coenzyme F430, the prosthetic group of methyl-coenzyme M reductase (MCR), which plays a key role in methanogenesis and anaerobic methane oxidation. Catalyzes the ATP-dependent amidation of the two carboxylate groups at positions a and c of Ni-sirohydrochlorin, using L-glutamine or ammonia as the nitrogen source. In Methanocaldococcus jannaschii (strain ATCC 43067 / DSM 2661 / JAL-1 / JCM 10045 / NBRC 100440) (Methanococcus jannaschii), this protein is Cobyrinate a,c-diamide synthase.